Here is a 367-residue protein sequence, read N- to C-terminus: Phosphoribosylaminoimidazole-succinocarboxamide synthase (367 aa).

It belongs to the SAICAR synthetase family.

It catalyses the reaction 5-amino-1-(5-phospho-D-ribosyl)imidazole-4-carboxylate + L-aspartate + ATP = (2S)-2-[5-amino-1-(5-phospho-beta-D-ribosyl)imidazole-4-carboxamido]succinate + ADP + phosphate + 2 H(+). It functions in the pathway purine metabolism; IMP biosynthesis via de novo pathway; 5-amino-1-(5-phospho-D-ribosyl)imidazole-4-carboxamide from 5-amino-1-(5-phospho-D-ribosyl)imidazole-4-carboxylate: step 1/2. In Colwellia psychrerythraea (strain 34H / ATCC BAA-681) (Vibrio psychroerythus), this protein is Phosphoribosylaminoimidazole-succinocarboxamide synthase.